A 277-amino-acid polypeptide reads, in one-letter code: MVTPQSPTPMFNGLDDDLYSDAKYAHEINDKMRVPKRIKATGEYSNEDLLLSNQNGMISSWNYHDKIDMNVPDRIVVLGHNQHLETRSAPREIQLENSILPKNPSVGLVRVQTPPRIITLTDQHFPSASEESSPIRANGHHLYGNDLDEDADDEEVHATQYVRANGVARMGFQGNDTNSVESDSQLTTGSASKRSQLNQQQHNNLDASMLAHREGTPMGELTPHEEILYLRRQLAKLNRRVLNIEINNEQRTQREKIVYCLGLAYFVLKTIFWLNRN.

The Cytoplasmic segment spans residues 1 to 256 (MVTPQSPTPM…NNEQRTQREK (256 aa)). Disordered regions lie at residues 124–148 (HFPS…NDLD) and 167–200 (VARM…LNQQ). Residues S127, S129, S132, and S133 each carry the phosphoserine modification. Polar residues predominate over residues 174–200 (GNDTNSVESDSQLTTGSASKRSQLNQQ). T177 carries the post-translational modification Phosphothreonine. Phosphoserine is present on residues S179, S182, and S190. Phosphothreonine occurs at positions 216 and 222. Residues 225–253 (EEILYLRRQLAKLNRRVLNIEINNEQRTQ) are a coiled coil. Residues 257–274 (IVYCLGLAYFVLKTIFWL) traverse the membrane as a helical; Anchor for type IV membrane protein segment. The Lumenal segment spans residues 275–277 (NRN).

Belongs to the Tango11 family.

The protein localises to the endoplasmic reticulum membrane. It is found in the mitochondrion outer membrane. Its subcellular location is the peroxisome. May play a role in mitochondrial and peroxisomal fission. In Drosophila melanogaster (Fruit fly), this protein is Transport and Golgi organization protein 11 (Tango11).